We begin with the raw amino-acid sequence, 295 residues long: Undecaprenyl-diphosphatase (295 aa).

Helical transmembrane passes span 39 to 59 (PGAA…LLYF), 97 to 117 (WYII…QHAI), 121 to 141 (LRNL…LWIV), 198 to 218 (AFLM…VKAI), 232 to 252 (ATIA…IGFL), and 263 to 283 (FAIY…CGVL).

This sequence belongs to the UppP family.

It is found in the cell membrane. The enzyme catalyses di-trans,octa-cis-undecaprenyl diphosphate + H2O = di-trans,octa-cis-undecaprenyl phosphate + phosphate + H(+). In terms of biological role, catalyzes the dephosphorylation of undecaprenyl diphosphate (UPP). Confers resistance to bacitracin. The chain is Undecaprenyl-diphosphatase from Bifidobacterium animalis subsp. lactis (strain AD011).